Reading from the N-terminus, the 171-residue chain is Adenine phosphoribosyltransferase (171 aa).

Belongs to the purine/pyrimidine phosphoribosyltransferase family. As to quaternary structure, homodimer.

Its subcellular location is the cytoplasm. The catalysed reaction is AMP + diphosphate = 5-phospho-alpha-D-ribose 1-diphosphate + adenine. It participates in purine metabolism; AMP biosynthesis via salvage pathway; AMP from adenine: step 1/1. Functionally, catalyzes a salvage reaction resulting in the formation of AMP, that is energically less costly than de novo synthesis. This chain is Adenine phosphoribosyltransferase, found in Acidiphilium cryptum (strain JF-5).